Here is a 440-residue protein sequence, read N- to C-terminus: Argininosuccinate lyase (440 aa).

The protein belongs to the lyase 1 family. Argininosuccinate lyase subfamily.

The protein resides in the cytoplasm. It catalyses the reaction 2-(N(omega)-L-arginino)succinate = fumarate + L-arginine. Its pathway is amino-acid biosynthesis; L-arginine biosynthesis; L-arginine from L-ornithine and carbamoyl phosphate: step 3/3. The chain is Argininosuccinate lyase from Clostridium botulinum (strain 657 / Type Ba4).